The chain runs to 156 residues: 6,7-dimethyl-8-ribityllumazine synthase (156 aa).

5-amino-6-(D-ribitylamino)uracil contacts are provided by residues phenylalanine 23, 57-59 (SFE), and 81-83 (AVI). 86–87 (GT) lines the (2S)-2-hydroxy-3-oxobutyl phosphate pocket. Catalysis depends on histidine 89, which acts as the Proton donor. Position 114 (tyrosine 114) interacts with 5-amino-6-(D-ribitylamino)uracil. Arginine 128 is a binding site for (2S)-2-hydroxy-3-oxobutyl phosphate.

It belongs to the DMRL synthase family. As to quaternary structure, forms an icosahedral capsid composed of 60 subunits, arranged as a dodecamer of pentamers.

The enzyme catalyses (2S)-2-hydroxy-3-oxobutyl phosphate + 5-amino-6-(D-ribitylamino)uracil = 6,7-dimethyl-8-(1-D-ribityl)lumazine + phosphate + 2 H2O + H(+). Its pathway is cofactor biosynthesis; riboflavin biosynthesis; riboflavin from 2-hydroxy-3-oxobutyl phosphate and 5-amino-6-(D-ribitylamino)uracil: step 1/2. Catalyzes the formation of 6,7-dimethyl-8-ribityllumazine by condensation of 5-amino-6-(D-ribitylamino)uracil with 3,4-dihydroxy-2-butanone 4-phosphate. This is the penultimate step in the biosynthesis of riboflavin. This is 6,7-dimethyl-8-ribityllumazine synthase from Halorhodospira halophila (strain DSM 244 / SL1) (Ectothiorhodospira halophila (strain DSM 244 / SL1)).